A 299-amino-acid chain; its full sequence is Taste receptor type 2 member 1 (299 aa).

Topologically, residues 1–9 (MLESHLIIY) are extracellular. Residues 10 to 30 (FLLAVIQFLLGIFTNGIIVVV) traverse the membrane as a helical segment. Over 31-55 (NGIDLIKHRKMAPLDLLLSCLAVSR) the chain is Cytoplasmic. Residues 56 to 76 (IFLQLFIFYVNVIVIFFIEFI) form a helical membrane-spanning segment. Over 77-81 (MCSAN) the chain is Extracellular. A helical transmembrane segment spans residues 82–102 (CAILLFVNELELWLATWLGVF). Residues 103-124 (YCAKVASVRHPLFIWLKMRISK) lie on the Cytoplasmic side of the membrane. A helical transmembrane segment spans residues 125–145 (LVPWMILGSLLYVSMICVFHS). At 146-178 (KYAGFMVPHFLRNFFSQNATIQKEDTLAIQIFS) the chain is on the extracellular side. Asn163 carries N-linked (GlcNAc...) asparagine glycosylation. Residues 179–199 (FVAEFSVPLLIFLVAVLLLIF) form a helical membrane-spanning segment. Topologically, residues 200–222 (SLGRHTRQMRNTVAGSRVPGRGA) are cytoplasmic. Residues 223–243 (PISALLSILSFLILYFSHCMI) traverse the membrane as a helical segment. Residues 244 to 257 (KVFLSSLKFHVRRF) are Extracellular-facing. Residues 258-278 (IFLFFILVIGIYPSGHSLILI) traverse the membrane as a helical segment. Residues 279–299 (LGNPKLKQNAKKFLLHSKCCQ) are Cytoplasmic-facing.

Belongs to the G-protein coupled receptor T2R family.

It localises to the membrane. Functionally, receptor that may play a role in the perception of bitterness and is gustducin-linked. May play a role in sensing the chemical composition of the gastrointestinal content. The activity of this receptor may stimulate alpha gustducin, mediate PLC-beta-2 activation and lead to the gating of TRPM5. The protein is Taste receptor type 2 member 1 (TAS2R1) of Pan paniscus (Pygmy chimpanzee).